We begin with the raw amino-acid sequence, 277 residues long: Phosphatidylglycerol--prolipoprotein diacylglyceryl transferase (277 aa).

A run of 4 helical transmembrane segments spans residues 22–42 (ISIR…YIVV), 59–79 (LFFY…CLFY), 107–127 (GYEG…LWLY), and 133–153 (MNYM…ACFI). R154 contacts a 1,2-diacyl-sn-glycero-3-phospho-(1'-sn-glycerol). A run of 3 helical transmembrane segments spans residues 186–206 (PAQL…MFLY), 216–236 (GFFF…VEFL), and 251–271 (MGQW…FFYG).

This sequence belongs to the Lgt family.

The protein localises to the cell inner membrane. It catalyses the reaction L-cysteinyl-[prolipoprotein] + a 1,2-diacyl-sn-glycero-3-phospho-(1'-sn-glycerol) = an S-1,2-diacyl-sn-glyceryl-L-cysteinyl-[prolipoprotein] + sn-glycerol 1-phosphate + H(+). It participates in protein modification; lipoprotein biosynthesis (diacylglyceryl transfer). In terms of biological role, catalyzes the transfer of the diacylglyceryl group from phosphatidylglycerol to the sulfhydryl group of the N-terminal cysteine of a prolipoprotein, the first step in the formation of mature lipoproteins. The sequence is that of Phosphatidylglycerol--prolipoprotein diacylglyceryl transferase from Bacteroides fragilis (strain ATCC 25285 / DSM 2151 / CCUG 4856 / JCM 11019 / LMG 10263 / NCTC 9343 / Onslow / VPI 2553 / EN-2).